Reading from the N-terminus, the 101-residue chain is MAKVSAIQKNKSRQKKSQRLHNKRSALKSKIYDKSLSLEQRFSLIIALAQLPRNSSSTRIRNRCELTGRPRGVTRKFGISRNKLRELIGRGLVPGVVKASW.

The disordered stretch occupies residues 1-25; it reads MAKVSAIQKNKSRQKKSQRLHNKRS. Residues 10–25 show a composition bias toward basic residues; the sequence is NKSRQKKSQRLHNKRS.

The protein belongs to the universal ribosomal protein uS14 family. In terms of assembly, part of the 30S ribosomal subunit. Contacts proteins S3 and S10.

Its function is as follows. Binds 16S rRNA, required for the assembly of 30S particles and may also be responsible for determining the conformation of the 16S rRNA at the A site. This is Small ribosomal subunit protein uS14 from Rickettsia typhi (strain ATCC VR-144 / Wilmington).